A 296-amino-acid chain; its full sequence is 4-diphosphocytidyl-2-C-methyl-D-erythritol kinase (296 aa).

Residue K18 is part of the active site. 102–112 (PMGGGIGGGSS) lines the ATP pocket. D144 is a catalytic residue.

It belongs to the GHMP kinase family. IspE subfamily.

It carries out the reaction 4-CDP-2-C-methyl-D-erythritol + ATP = 4-CDP-2-C-methyl-D-erythritol 2-phosphate + ADP + H(+). It functions in the pathway isoprenoid biosynthesis; isopentenyl diphosphate biosynthesis via DXP pathway; isopentenyl diphosphate from 1-deoxy-D-xylulose 5-phosphate: step 3/6. Catalyzes the phosphorylation of the position 2 hydroxy group of 4-diphosphocytidyl-2C-methyl-D-erythritol. The chain is 4-diphosphocytidyl-2-C-methyl-D-erythritol kinase from Vibrio atlanticus (strain LGP32) (Vibrio splendidus (strain Mel32)).